Here is a 367-residue protein sequence, read N- to C-terminus: MKEPLDLSKYSVRTDLAVEAHQMLQERQEEQKGIEGVIVKEREEEGITVTKVTIDEAASDSMGKKPGNYLTLEVQGIRQQDTELQQKVERIFAKEFSYFLEEVGVTKEASCLIVGLGNWNVTPDALGPIVVENVLVTRHLFQLQPESVEEGFRPVSAIRPGVMGITGIETSDVIYGIIEKTKPDFVIAIDALAARSIERVNSTIQISDTGIHPGSGVGNKRKELSKETLGIPVIAIGVPTVVDAVSITSDTIDFILKHFGREMKEGNKPSRSLLPAGFTFGEKKKLTEEDMPDEKSRNMFLGAVGTLGDEEKRKLIYEVLSPLGHNLMVTPKEVDAFIEDMANVIASGLNAALHHQIDQDNTGAYTH.

The propeptide occupies M1–D15.

This sequence belongs to the peptidase A25 family. As to quaternary structure, homotetramer. Autoproteolytically processed. The inactive tetrameric zymogen termed p46 autoprocesses to a smaller form termed p41, which is active only during spore germination.

It carries out the reaction Endopeptidase action with P4 Glu or Asp, P1 preferably Glu &gt; Asp, P1' hydrophobic and P2' Ala.. Its function is as follows. Initiates the rapid degradation of small, acid-soluble proteins during spore germination. In Bacillus cereus (strain ATCC 10987 / NRS 248), this protein is Germination protease.